Reading from the N-terminus, the 1496-residue chain is Chromosome partition protein MukB (1496 aa).

63-70 serves as a coordination point for ATP; it reads GGNGAGKS. 2 coiled-coil regions span residues 328–493 and 536–632; these read KLEL…QRLS and KMQA…APAW. The interval 694 to 811 is flexible hinge; the sequence is PDGSDDVRLN…EVPLFGRAAR (118 aa). 2 coiled-coil regions span residues 861-1171 and 1235-1291; these read NPEE…SAEE and IDAI…LQNI. Positions 1082–1091 are enriched in basic and acidic residues; the sequence is RARSRRDELQ. The segment at 1082-1101 is disordered; it reads RARSRRDELQQRLSQQRSRK.

This sequence belongs to the SMC family. MukB subfamily. Homodimerization via its hinge domain. Binds to DNA via its C-terminal region. Interacts, and probably forms a ternary complex, with MukE and MukF via its C-terminal region. The complex formation is stimulated by calcium or magnesium. Interacts with tubulin-related protein FtsZ.

The protein resides in the cytoplasm. The protein localises to the nucleoid. Plays a central role in chromosome condensation, segregation and cell cycle progression. Functions as a homodimer, which is essential for chromosome partition. Involved in negative DNA supercoiling in vivo, and by this means organize and compact chromosomes. May achieve or facilitate chromosome segregation by condensation DNA from both sides of a centrally located replisome during cell division. This Actinobacillus pleuropneumoniae serotype 7 (strain AP76) protein is Chromosome partition protein MukB.